The primary structure comprises 462 residues: Putative zinc metalloprotease RSc1411 (462 aa).

The chain crosses the membrane as a helical span at residues 1–21; the sequence is MLTVLAFVFAIAVLIVVHELG. His18 is a binding site for Zn(2+). The active site involves Glu19. Zn(2+) is bound at residue His22. A helical membrane pass occupies residues 102-124; sequence FAIVAAGPVFNFLLAIALYALLA. Residues 201–283 enclose the PDZ domain; sequence TVRLRELPSA…MPEQNASIDI (83 aa). Transmembrane regions (helical) follow at residues 386–406 and 430–450; these read FVAF…LPVP and WQAV…SLAL.

The protein belongs to the peptidase M50B family. Requires Zn(2+) as cofactor.

The protein resides in the cell inner membrane. In Ralstonia nicotianae (strain ATCC BAA-1114 / GMI1000) (Ralstonia solanacearum), this protein is Putative zinc metalloprotease RSc1411.